A 33-amino-acid chain; its full sequence is Brevinin-2Ea (33 aa).

Cysteine 27 and cysteine 33 are oxidised to a cystine.

Belongs to the frog skin active peptide (FSAP) family. Brevinin subfamily. In terms of tissue distribution, expressed by the skin glands.

The protein localises to the secreted. In terms of biological role, shows antibacterial activity against representative Gram-negative and Gram-positive bacterial species, and hemolytic activity. In Pelophylax lessonae (Pool frog), this protein is Brevinin-2Ea.